We begin with the raw amino-acid sequence, 448 residues long: Methionine aminopeptidase 2 (448 aa).

Positions 1–17 are enriched in low complexity; sequence MPATAEAADAATQATDA. Residues 1–87 form a disordered region; sequence MPATAEAADA…QTEPPSIGLT (87 aa). A compositionally biased stretch (basic and acidic residues) spans 21-34; sequence KLEENKLPEGQERG. The span at 35–46 shows a compositional bias: acidic residues; it reads PEEEEDDDDDET. A compositionally biased stretch (basic residues) spans 55-71; that stretch reads KKKKKKKSGAKKKKSKT. A substrate-binding site is contributed by H200. A divalent metal cation is bound by residues D220, D231, and H300. H308 contacts substrate. Residues E334 and E429 each coordinate a divalent metal cation.

The protein belongs to the peptidase M24A family. Methionine aminopeptidase eukaryotic type 2 subfamily. Requires Co(2+) as cofactor. It depends on Zn(2+) as a cofactor. Mn(2+) is required as a cofactor. The cofactor is Fe(2+).

The protein resides in the cytoplasm. The enzyme catalyses Release of N-terminal amino acids, preferentially methionine, from peptides and arylamides.. In terms of biological role, cotranslationally removes the N-terminal methionine from nascent proteins. The N-terminal methionine is often cleaved when the second residue in the primary sequence is small and uncharged (Met-Ala-, Cys, Gly, Pro, Ser, Thr, or Val). The sequence is that of Methionine aminopeptidase 2 from Malassezia globosa (strain ATCC MYA-4612 / CBS 7966) (Dandruff-associated fungus).